The chain runs to 95 residues: Integration host factor subunit beta (95 aa).

The segment at 56-76 (RAPRTGRNPKTGTSVELDGKY) is disordered.

The protein belongs to the bacterial histone-like protein family. In terms of assembly, heterodimer of an alpha and a beta chain.

In terms of biological role, this protein is one of the two subunits of integration host factor, a specific DNA-binding protein that functions in genetic recombination as well as in transcriptional and translational control. This chain is Integration host factor subunit beta, found in Shewanella denitrificans (strain OS217 / ATCC BAA-1090 / DSM 15013).